The primary structure comprises 441 residues: Mitochondrial distribution and morphology protein 12 (441 aa).

The region spanning 1–441 is the SMP-LTD domain; that stretch reads MSIDIDWERA…VYPSFWTFLV (441 aa). Disordered stretches follow at residues 70 to 89 and 180 to 289; these read YEDG…PMRE and TPLR…RMRE. Composition is skewed to polar residues over residues 226 to 245 and 253 to 263; these read SRPS…SVST and SSQTVLANNPG.

It belongs to the MDM12 family. Component of the ER-mitochondria encounter structure (ERMES) or MDM complex, composed of MMM1, MDM10, MDM12 and MDM34. An MMM1 homodimer associates with one molecule of MDM12 on each side in a pairwise head-to-tail manner, and the SMP-LTD domains of MMM1 and MDM12 generate a continuous hydrophobic tunnel for phospholipid trafficking.

It is found in the mitochondrion outer membrane. Its subcellular location is the endoplasmic reticulum membrane. Functionally, component of the ERMES/MDM complex, which serves as a molecular tether to connect the endoplasmic reticulum (ER) and mitochondria. Components of this complex are involved in the control of mitochondrial shape and protein biogenesis, and function in nonvesicular lipid trafficking between the ER and mitochondria. MDM12 is required for the interaction of the ER-resident membrane protein MMM1 and the outer mitochondrial membrane-resident beta-barrel protein MDM10. The MDM12-MMM1 subcomplex functions in the major beta-barrel assembly pathway that is responsible for biogenesis of all mitochondrial outer membrane beta-barrel proteins, and acts in a late step after the SAM complex. The MDM10-MDM12-MMM1 subcomplex further acts in the TOM40-specific pathway after the action of the MDM12-MMM1 complex. Essential for establishing and maintaining the structure of mitochondria and maintenance of mtDNA nucleoids. This Paracoccidioides brasiliensis (strain Pb03) protein is Mitochondrial distribution and morphology protein 12.